The primary structure comprises 62 residues: Large ribosomal subunit protein bL33 (62 aa).

This sequence belongs to the bacterial ribosomal protein bL33 family.

This is Large ribosomal subunit protein bL33 from Phocaeicola vulgatus (strain ATCC 8482 / DSM 1447 / JCM 5826 / CCUG 4940 / NBRC 14291 / NCTC 11154) (Bacteroides vulgatus).